The primary structure comprises 472 residues: D-inositol 3-phosphate glycosyltransferase (472 aa).

H48 contacts 1D-myo-inositol 3-phosphate. UDP-N-acetyl-alpha-D-glucosamine-binding positions include 54–55 and G62; that span reads QP. Residues 59 to 64, K117, Y150, T174, and R194 contribute to the 1D-myo-inositol 3-phosphate site; that span reads DAGGMN. UDP-N-acetyl-alpha-D-glucosamine-binding residues include R282, K287, and V348. Mg(2+)-binding residues include F357, R358, and A360. 2 residues coordinate UDP-N-acetyl-alpha-D-glucosamine: E370 and E378. T384 serves as a coordination point for Mg(2+).

This sequence belongs to the glycosyltransferase group 1 family. MshA subfamily. Homodimer.

The enzyme catalyses 1D-myo-inositol 3-phosphate + UDP-N-acetyl-alpha-D-glucosamine = 1D-myo-inositol 2-acetamido-2-deoxy-alpha-D-glucopyranoside 3-phosphate + UDP + H(+). Its function is as follows. Catalyzes the transfer of a N-acetyl-glucosamine moiety to 1D-myo-inositol 3-phosphate to produce 1D-myo-inositol 2-acetamido-2-deoxy-glucopyranoside 3-phosphate in the mycothiol biosynthesis pathway. The protein is D-inositol 3-phosphate glycosyltransferase of Streptomyces griseus subsp. griseus (strain JCM 4626 / CBS 651.72 / NBRC 13350 / KCC S-0626 / ISP 5235).